Reading from the N-terminus, the 535-residue chain is CTP synthase (535 aa).

Positions 1–267 (MTKYIFVTGG…DSLVCSHLKL (267 aa)) are amidoligase domain. Serine 13 is a CTP binding site. Serine 13 contacts UTP. 14-19 (SLGKGI) contributes to the ATP binding site. Tyrosine 54 is an L-glutamine binding site. Aspartate 71 serves as a coordination point for ATP. 2 residues coordinate Mg(2+): aspartate 71 and glutamate 141. CTP is bound by residues 148–150 (DIE), 188–193 (KTKPTQ), and lysine 224. Residues 188–193 (KTKPTQ) and lysine 224 each bind UTP. The 243-residue stretch at 292–534 (TIALVGKYVE…VHASLKTSEK (243 aa)) folds into the Glutamine amidotransferase type-1 domain. Glycine 354 contacts L-glutamine. The active-site Nucleophile; for glutamine hydrolysis is cysteine 381. Residues 382 to 385 (LGMQ), glutamate 405, and arginine 462 contribute to the L-glutamine site. Catalysis depends on residues histidine 507 and glutamate 509.

This sequence belongs to the CTP synthase family. In terms of assembly, homotetramer.

The catalysed reaction is UTP + L-glutamine + ATP + H2O = CTP + L-glutamate + ADP + phosphate + 2 H(+). It catalyses the reaction L-glutamine + H2O = L-glutamate + NH4(+). It carries out the reaction UTP + NH4(+) + ATP = CTP + ADP + phosphate + 2 H(+). The protein operates within pyrimidine metabolism; CTP biosynthesis via de novo pathway; CTP from UDP: step 2/2. Its activity is regulated as follows. Allosterically activated by GTP, when glutamine is the substrate; GTP has no effect on the reaction when ammonia is the substrate. The allosteric effector GTP functions by stabilizing the protein conformation that binds the tetrahedral intermediate(s) formed during glutamine hydrolysis. Inhibited by the product CTP, via allosteric rather than competitive inhibition. Catalyzes the ATP-dependent amination of UTP to CTP with either L-glutamine or ammonia as the source of nitrogen. Regulates intracellular CTP levels through interactions with the four ribonucleotide triphosphates. The protein is CTP synthase of Bacillus licheniformis (strain ATCC 14580 / DSM 13 / JCM 2505 / CCUG 7422 / NBRC 12200 / NCIMB 9375 / NCTC 10341 / NRRL NRS-1264 / Gibson 46).